The chain runs to 50 residues: Apoptotic protease-activating factor 1 (50 aa).

Residues Ile1 to Gly31 form the CARD domain. Residues Gly46–Ser50 enclose the NB-ARC domain.

In terms of assembly, monomer. Oligomerizes to a heptameric ring, known as the apoptosome, upon binding of cytochrome c and dATP. Oligomeric Apaf-1 and pro-caspase-9 bind to each other via their respective NH2-terminal CARD domains and consecutively mature caspase-9 is released from the complex. Interacts with APIP. Interacts (via CARD and NACHT domains) with NAIP/BIRC1 (via NACHT domain). Interacts with CIAO2A.

In terms of biological role, oligomeric Apaf-1 mediates the cytochrome c-dependent autocatalytic activation of pro-caspase 9 (Apaf-3), leading to the activation of caspase-3 and apoptosis. This activation requires ATP. This is Apoptotic protease-activating factor 1 (APAF1) from Canis lupus familiaris (Dog).